Here is a 425-residue protein sequence, read N- to C-terminus: UDP-N-acetylglucosamine 1-carboxyvinyltransferase (425 aa).

24-25 (KN) provides a ligand contact to phosphoenolpyruvate. A UDP-N-acetyl-alpha-D-glucosamine-binding site is contributed by arginine 95. Cysteine 119 (proton donor) is an active-site residue. Position 119 is a 2-(S-cysteinyl)pyruvic acid O-phosphothioketal (cysteine 119). Residues 124-128 (RPVDQ), aspartate 308, and valine 330 contribute to the UDP-N-acetyl-alpha-D-glucosamine site.

The protein belongs to the EPSP synthase family. MurA subfamily.

It is found in the cytoplasm. It carries out the reaction phosphoenolpyruvate + UDP-N-acetyl-alpha-D-glucosamine = UDP-N-acetyl-3-O-(1-carboxyvinyl)-alpha-D-glucosamine + phosphate. It participates in cell wall biogenesis; peptidoglycan biosynthesis. Functionally, cell wall formation. Adds enolpyruvyl to UDP-N-acetylglucosamine. In Deinococcus deserti (strain DSM 17065 / CIP 109153 / LMG 22923 / VCD115), this protein is UDP-N-acetylglucosamine 1-carboxyvinyltransferase.